A 223-amino-acid chain; its full sequence is Phosphoribosylformylglycinamidine synthase subunit PurQ (223 aa).

The Glutamine amidotransferase type-1 domain occupies 2–223; that stretch reads KIAVVVFPGS…KSLLKAGVQA (222 aa). Cys-86 acts as the Nucleophile in catalysis. Catalysis depends on residues His-195 and Glu-197.

As to quaternary structure, part of the FGAM synthase complex composed of 1 PurL, 1 PurQ and 2 PurS subunits.

It is found in the cytoplasm. The catalysed reaction is N(2)-formyl-N(1)-(5-phospho-beta-D-ribosyl)glycinamide + L-glutamine + ATP + H2O = 2-formamido-N(1)-(5-O-phospho-beta-D-ribosyl)acetamidine + L-glutamate + ADP + phosphate + H(+). It catalyses the reaction L-glutamine + H2O = L-glutamate + NH4(+). It participates in purine metabolism; IMP biosynthesis via de novo pathway; 5-amino-1-(5-phospho-D-ribosyl)imidazole from N(2)-formyl-N(1)-(5-phospho-D-ribosyl)glycinamide: step 1/2. In terms of biological role, part of the phosphoribosylformylglycinamidine synthase complex involved in the purines biosynthetic pathway. Catalyzes the ATP-dependent conversion of formylglycinamide ribonucleotide (FGAR) and glutamine to yield formylglycinamidine ribonucleotide (FGAM) and glutamate. The FGAM synthase complex is composed of three subunits. PurQ produces an ammonia molecule by converting glutamine to glutamate. PurL transfers the ammonia molecule to FGAR to form FGAM in an ATP-dependent manner. PurS interacts with PurQ and PurL and is thought to assist in the transfer of the ammonia molecule from PurQ to PurL. The polypeptide is Phosphoribosylformylglycinamidine synthase subunit PurQ (Lactobacillus acidophilus (strain ATCC 700396 / NCK56 / N2 / NCFM)).